The sequence spans 2183 residues: RNA replication polyprotein (2183 aa).

Positions 63 to 256 (SPHSYRPHSH…YIQPVAGSYL (194 aa)) constitute an Alphavirus-like MT domain. Residues 762 to 853 (FYNQCLVQEY…RISLTFRLTK (92 aa)) form the Fe2OG dioxygenase domain. Fe cation contacts are provided by His-780, Asp-782, and His-835. Arg-844 lines the 2-oxoglutarate pocket. The interval 883–910 (ERRSHQSGGRPAVELEGHEREKVNSDSS) is disordered. Basic and acidic residues predominate over residues 895–906 (VELEGHEREKVN). The region spanning 1091-1199 (FHSFDVEADG…DNHFKPCMPV (109 aa)) is the OTU domain. The 91-residue stretch at 1198-1288 (PVNGCVIRAI…LEKEHLAHIP (91 aa)) folds into the Peptidase C23 domain. Active-site residues include Cys-1202 and His-1283. The (+)RNA virus helicase ATP-binding domain occupies 1349–1520 (KEAQKDLASK…SGRSYKFNIL (172 aa)). 1374–1381 (GTFGCGKS) contributes to the ATP binding site. In terms of domain architecture, (+)RNA virus helicase C-terminal spans 1521 to 1667 (SQRFRNPVFY…TKRACNDDII (147 aa)). The RdRp catalytic domain maps to 1961–2068 (GVCTESDYEA…NSRLKVTNRF (108 aa)).

This sequence belongs to the potexviruses/carlaviruses RNA replication protein family. Fe(2+) is required as a cofactor. Post-translationally, specific enzymatic cleavages by the viral protease yield mature proteins.

The catalysed reaction is ATP + H2O = ADP + phosphate + H(+). The enzyme catalyses RNA(n) + a ribonucleoside 5'-triphosphate = RNA(n+1) + diphosphate. In terms of biological role, RNA-directed RNA polymerase involved in viral RNA replication. Its function is as follows. Protease: Thiol protease that cleaves the polyprotein. The polypeptide is RNA replication polyprotein (Apple stem pitting virus (isolate PA66) (ASPV)).